Reading from the N-terminus, the 482-residue chain is MDFHSCLYDIAERLGNEELAALKFLCLDHIPQKKQESINDVLVLFQRLQEEGMLEEDNLSFLKELLFHISRRDLLSRVLKSSPEEMVRELQVLGKAQVSAYRVMLFKLSEDMDKEDLKSFKFLLITEIPKCKLQDNSSLLDIFVEMEKRTILAENNLVTLKSICFRVNRSLLGRIDDYERSSTERRMSTEGGEELPVSVLDEVTIKMQDMWDSPGEQESESLNSDNVYQMKSKPRGYCLIFNNNNFSKAREDIPKLSNMRDRKGTNYDEEALSKTFKELHFEIVSFSDCTASQIHEVLVSYQSKDHKGKDCFICCILSHGDKGIVYGTDGKEASIYELTSYFTGSKCPSLAGKPKIFFIQACQGNNFQKAVPVPDETGLEQEHVLEEDSSSYKNYIPDEADFLLGMATVKNCVSYRDPTRGTWYIQSLCQSLRERCPRGEDILSILTGVNYDVSNKDNPRNMGKQMPQPIFTLRKKLFFPPN.

Residues 1 to 218 constitute a propeptide that is removed on maturation; sequence MDFHSCLYDI…DMWDSPGEQE (218 aa). DED domains follow at residues 2-80 and 100-177; these read DFHS…RVLK and AYRV…RIDD. Residues serine 188 and serine 213 each carry the phosphoserine modification. Histidine 319 is an active-site residue. Phosphotyrosine is present on tyrosine 336. Cysteine 362 is a catalytic residue. Positions 379-388 are excised as a propeptide; that stretch reads LEQEHVLEED. Serine 390 carries the post-translational modification Phosphoserine; by CDK1.

Belongs to the peptidase C14A family. In terms of assembly, heterotetramer that consists of two anti-parallel arranged heterodimers, each one formed by a 18 kDa (p18) and a 10 kDa (p10) subunit. Component of the death-induced signaling complex (DISC) composed of cell surface receptor FAS/CD95 or TNFRSF1A, adapter protein FADD and the CASP8 protease; recruitment of CASP8 to the complex is required for processing of CASP8 into the p18 and p10 subunits. Component of the AIM2 PANoptosome complex, a multiprotein complex that drives inflammatory cell death (PANoptosis). Interacts with CFLAR and PEA15. Interacts with RFFL and RNF34; negatively regulate CASP8 through proteasomal degradation. Interacts with TNFAIP8L2. Interacts with CASP8AP2. Interacts with NOL3; decreases CASP8 activity in a mitochondria localization- and phosphorylation-dependent manner and this interaction is dissociated by calcium. Interacts with UBR2. Interacts with RIPK1. Interacts with stimulated TNFRSF10B; this interaction is followed by CASP8 proteolytic cleavage and activation. Generation of the subunits requires association with the death-inducing signaling complex (DISC), whereas additional processing is likely due to the autocatalytic activity of the activated protease. GZMB and CASP10 can be involved in these processing events. In terms of processing, phosphorylation on Ser-389 during mitosis by CDK1 inhibits activation by proteolysis and prevents apoptosis. This phosphorylation occurs in cancer cell lines, as well as in primary breast tissues and lymphocytes.

The protein resides in the cytoplasm. It is found in the nucleus. The catalysed reaction is Strict requirement for Asp at position P1 and has a preferred cleavage sequence of (Leu/Asp/Val)-Glu-Thr-Asp-|-(Gly/Ser/Ala).. Its activity is regulated as follows. CASP8 activity is restricted by RIPK1. Thiol protease that plays a key role in programmed cell death by acting as a molecular switch for apoptosis, necroptosis and pyroptosis, and is required to prevent tissue damage during embryonic development and adulthood. Initiator protease that induces extrinsic apoptosis by mediating cleavage and activation of effector caspases responsible for FAS/CD95-mediated and TNFRSF1A-induced cell death. Cleaves and activates effector caspases CASP3, CASP4, CASP6, CASP7, CASP9 and CASP10. Binding to the adapter molecule FADD recruits it to either receptor FAS/CD95 or TNFRSF1A. The resulting aggregate called the death-inducing signaling complex (DISC) performs CASP8 proteolytic activation. The active dimeric enzyme is then liberated from the DISC and free to activate downstream apoptotic proteases. Proteolytic fragments of the N-terminal propeptide (termed CAP3, CAP5 and CAP6) are likely retained in the DISC. In addition to extrinsic apoptosis, also acts as a negative regulator of necroptosis: acts by cleaving RIPK1 at 'Asp-325', which is crucial to inhibit RIPK1 kinase activity, limiting TNF-induced apoptosis, necroptosis and inflammatory response. Also able to initiate pyroptosis by mediating cleavage and activation of gasdermin-C and -D (GSDMC and GSDMD, respectively): gasdermin cleavage promotes release of the N-terminal moiety that binds to membranes and forms pores, triggering pyroptosis. Initiates pyroptosis following inactivation of MAP3K7/TAK1. Also acts as a regulator of innate immunity by mediating cleavage and inactivation of N4BP1 downstream of TLR3 or TLR4, thereby promoting cytokine production. May participate in the Granzyme B (GZMB) cell death pathways. Cleaves PARP1 and PARP2. The sequence is that of Caspase-8 from Rattus norvegicus (Rat).